We begin with the raw amino-acid sequence, 497 residues long: Galactose-1-phosphate uridylyltransferase (497 aa).

It belongs to the galactose-1-phosphate uridylyltransferase type 2 family.

The protein localises to the cytoplasm. It catalyses the reaction alpha-D-galactose 1-phosphate + UDP-alpha-D-glucose = alpha-D-glucose 1-phosphate + UDP-alpha-D-galactose. Its pathway is carbohydrate metabolism; galactose metabolism. The sequence is that of Galactose-1-phosphate uridylyltransferase from Enterococcus faecalis (strain ATCC 700802 / V583).